Consider the following 187-residue polypeptide: Large ribosomal subunit protein uL5 (187 aa).

Belongs to the universal ribosomal protein uL5 family. Part of the 50S ribosomal subunit; part of the 5S rRNA/L5/L18/L25 subcomplex. Contacts the 5S rRNA and the P site tRNA. Forms a bridge to the 30S subunit in the 70S ribosome.

Functionally, this is one of the proteins that bind and probably mediate the attachment of the 5S RNA into the large ribosomal subunit, where it forms part of the central protuberance. In the 70S ribosome it contacts protein S13 of the 30S subunit (bridge B1b), connecting the 2 subunits; this bridge is implicated in subunit movement. Contacts the P site tRNA; the 5S rRNA and some of its associated proteins might help stabilize positioning of ribosome-bound tRNAs. This is Large ribosomal subunit protein uL5 from Mycolicibacterium smegmatis (strain ATCC 700084 / mc(2)155) (Mycobacterium smegmatis).